The sequence spans 349 residues: Putative F-box/LRR-repeat protein At3g16555 (349 aa).

Positions 1 to 48 (MVLLPWELEEDILSRLPPRSLVQFRSVCKRWNALFDVKSFNKDQFARA) constitute an F-box domain. An LRR repeat occupies 267-290 (VVWISLLTLPPNNLPNLFIVCYGI).

In Arabidopsis thaliana (Mouse-ear cress), this protein is Putative F-box/LRR-repeat protein At3g16555.